A 1363-amino-acid chain; its full sequence is DNA-directed RNA polymerase subunit beta (1363 aa).

Belongs to the RNA polymerase beta chain family. The RNAP catalytic core consists of 2 alpha, 1 beta, 1 beta' and 1 omega subunit. When a sigma factor is associated with the core the holoenzyme is formed, which can initiate transcription.

The enzyme catalyses RNA(n) + a ribonucleoside 5'-triphosphate = RNA(n+1) + diphosphate. DNA-dependent RNA polymerase catalyzes the transcription of DNA into RNA using the four ribonucleoside triphosphates as substrates. The protein is DNA-directed RNA polymerase subunit beta of Pelagibacter ubique (strain HTCC1062).